A 326-amino-acid chain; its full sequence is Aspartate carbamoyltransferase catalytic subunit (326 aa).

Carbamoyl phosphate contacts are provided by R55 and T56. K83 is a binding site for L-aspartate. 3 residues coordinate carbamoyl phosphate: R105, H135, and Q138. 2 residues coordinate L-aspartate: R176 and R230. G271 and P272 together coordinate carbamoyl phosphate.

The protein belongs to the aspartate/ornithine carbamoyltransferase superfamily. ATCase family. In terms of assembly, heterododecamer (2C3:3R2) of six catalytic PyrB chains organized as two trimers (C3), and six regulatory PyrI chains organized as three dimers (R2).

It catalyses the reaction carbamoyl phosphate + L-aspartate = N-carbamoyl-L-aspartate + phosphate + H(+). It participates in pyrimidine metabolism; UMP biosynthesis via de novo pathway; (S)-dihydroorotate from bicarbonate: step 2/3. Its function is as follows. Catalyzes the condensation of carbamoyl phosphate and aspartate to form carbamoyl aspartate and inorganic phosphate, the committed step in the de novo pyrimidine nucleotide biosynthesis pathway. The sequence is that of Aspartate carbamoyltransferase catalytic subunit from Streptomyces coelicolor (strain ATCC BAA-471 / A3(2) / M145).